Consider the following 318-residue polypeptide: MGERDDGLGLSLSLGNSQQKEPSLRLNLMPLTTSSSSSSFQHMHNQNNNSHPQKIHNISWTHLFQSSGIKRTTAERNSDAGSFLRGFNVNRAQSSVAVVDLEEEAAVVSSPNSAVSSLSGNKRDLAVARGGDENEAERASCSRGGGSGGSDDEDGGNGDGSRKKLRLSKDQALVLEETFKEHSTLNPKQKLALAKQLNLRARQVEVWFQNRRARTKLKQTEVDCEYLKRCCDNLTEENRRLQKEVSELRALKLSPHLYMHMTPPTTLTMCPSCERVSSSAATVTAAPSTTTTPTVVGRPSPQRLTPWTAISLQQKSGR.

Disordered stretches follow at residues 1 to 23 and 128 to 165; these read MGER…KEPS and ARGG…RKKL. The span at 8–17 shows a compositional bias: low complexity; sequence LGLSLSLGNS. The span at 128 to 140 shows a compositional bias: basic and acidic residues; sequence ARGGDENEAERAS. The homeobox DNA-binding region spans 160-219; that stretch reads GSRKKLRLSKDQALVLEETFKEHSTLNPKQKLALAKQLNLRARQVEVWFQNRRARTKLKQ. The leucine-zipper stretch occupies residues 227–248; it reads LKRCCDNLTEENRRLQKEVSEL.

The protein belongs to the HD-ZIP homeobox family. Class II subfamily.

It localises to the nucleus. Functionally, probable transcription factor. In Arabidopsis thaliana (Mouse-ear cress), this protein is Homeobox-leucine zipper protein ATHB-4 (ATHB-4).